A 167-amino-acid chain; its full sequence is NADH-quinone oxidoreductase subunit I 1 (167 aa).

4Fe-4S ferredoxin-type domains lie at 58 to 88 (LRRYPNGEERCIACKLCEAVCPAQAITIDAE) and 98 to 127 (TRYDIDMTKCIYCGFCQEACPVDAIVEGPN). Positions 68, 71, 74, 78, 107, 110, 113, and 117 each coordinate [4Fe-4S] cluster.

The protein belongs to the complex I 23 kDa subunit family. In terms of assembly, NDH-1 is composed of 14 different subunits. Subunits NuoA, H, J, K, L, M, N constitute the membrane sector of the complex. It depends on [4Fe-4S] cluster as a cofactor.

Its subcellular location is the cell inner membrane. It carries out the reaction a quinone + NADH + 5 H(+)(in) = a quinol + NAD(+) + 4 H(+)(out). NDH-1 shuttles electrons from NADH, via FMN and iron-sulfur (Fe-S) centers, to quinones in the respiratory chain. The immediate electron acceptor for the enzyme in this species is believed to be ubiquinone. Couples the redox reaction to proton translocation (for every two electrons transferred, four hydrogen ions are translocated across the cytoplasmic membrane), and thus conserves the redox energy in a proton gradient. The sequence is that of NADH-quinone oxidoreductase subunit I 1 from Cereibacter sphaeroides (strain ATCC 17029 / ATH 2.4.9) (Rhodobacter sphaeroides).